A 392-amino-acid polypeptide reads, in one-letter code: ERBB-3 BINDING PROTEIN 1 (392 aa).

2 necessary for nucleolar localization regions span residues 1–50 (MSSD…IVDI) and 298–392 (HLQP…NAQE). An RNA-binding region spans residues 48-56 (VDICEKGDS). Residues 355–372 (GIKKKKGGGKKKKAQKAG) form an interaction with RNA region. The Nuclear localization signal signature appears at 357–367 (KKKKGGGKKKK). The segment covering 358 to 369 (KKKGGGKKKKAQ) has biased composition (basic residues). Positions 358-392 (KKKGGGKKKKAQKAGEKGEASTEAEPMDASSNAQE) are disordered.

This sequence belongs to the peptidase M24 family. In terms of assembly, component of a ribonucleoprotein complex. Interacts with REIL1 and REIL2. As to expression, strongly expressed in calls, roots and flowers, to a lower extent, in stems and siliques, but hardly detectable in leaves.

The protein resides in the nucleus. In terms of biological role, binds RNA. Associates with 28S, 18S and 5.8S mature rRNAs, several rRNA precursors and probably U3 small nucleolar RNA. May be involved in regulation of intermediate and late steps of rRNA processing. May be involved in ribosome assembly. Required for expression of cell cycle genes such as CYCD3-1, RNR2A and CDKB1-1. Promotes, in a dose- and auxin-dependent manner, organ growth by stimulating both cell proliferation and expansion, via the regulation of RBR1 levels. The polypeptide is ERBB-3 BINDING PROTEIN 1 (Arabidopsis thaliana (Mouse-ear cress)).